We begin with the raw amino-acid sequence, 358 residues long: MIEQQKRKGPELPLVPVKRPRHELLLGAAGAGPGAGPQQATPGALLQAGPPRCSSLQAPIMLLSGHEGEVYCCKFHPNGSTLASAGFDRLILLWNVYGDCDNYATLKGHSGAVMELHYNTDGSMLFSASTDKTVAVWDSETGERVKRLKGHTSFVNSCYPARRGPQLVCTGSDDGTVKLWDIRKKAAVQTFQNTYQVLAVTFNDTSDQIISGGIDNDIKVWDLRQNKLTYTMRGHADSVTGLSLSSEGSYLLSNAMDNTVRVWDVRPFAPKERCVKIFQGNVHNFEKNLLRCSWSPDGSKIAAGSADRFVYVWDTTSRRVLYKLPGHAGSINEVAFHPDEPIILSASSDKRLYMGEIQ.

Lys-18 participates in a covalent cross-link: Glycyl lysine isopeptide (Lys-Gly) (interchain with G-Cter in SUMO2). Arg-21 is modified (asymmetric dimethylarginine). 7 WD repeats span residues 65 to 104 (GHEG…DNYA), 108 to 147 (GHSG…RVKR), 150 to 190 (GHTS…AVQT), 192 to 231 (QNTY…LTYT), 234 to 273 (GHAD…PKER), 284 to 323 (NFEK…VLYK), and 326 to 358 (GHAG…GEIQ). Lys-271 participates in a covalent cross-link: Glycyl lysine isopeptide (Lys-Gly) (interchain with G-Cter in SUMO2).

As to quaternary structure, component of the pre-catalytic and catalytic spliceosome complexes. Component of the postcatalytic spliceosome P complex. Part of the U5 snRNP complex. Interacts with PRPF8. Component of the U4/U6-U5 tri-snRNP complex composed of the U4, U6 and U5 snRNAs and at least PRPF3, PRPF4, PRPF6, PRPF8, PRPF31, SNRNP200, TXNL4A, WDR57, SNRNP40, DDX23, CD2BP2, PPIH, SNU13, EFTUD2, SART1 and USP39. Component of the minor spliceosome, which splices U12-type introns.

The protein localises to the nucleus. Functionally, required for pre-mRNA splicing as component of the activated spliceosome. Component of the U5 small nuclear ribonucleoprotein (snRNP) complex and the U4/U6-U5 tri-snRNP complex, building blocks of the spliceosome. As a component of the minor spliceosome, involved in the splicing of U12-type introns in pre-mRNAs. This is U5 small nuclear ribonucleoprotein 40 kDa protein (Snrnp40) from Mus musculus (Mouse).